Consider the following 98-residue polypeptide: NADH-ubiquinone oxidoreductase chain 4L (98 aa).

The next 3 membrane-spanning stretches (helical) occupy residues 1-21, 29-49, and 58-78; these read MPII…GMLF, SLLC…LMAL, and IVPI…LALL.

This sequence belongs to the complex I subunit 4L family. Core subunit of respiratory chain NADH dehydrogenase (Complex I) which is composed of 45 different subunits.

The protein resides in the mitochondrion inner membrane. It carries out the reaction a ubiquinone + NADH + 5 H(+)(in) = a ubiquinol + NAD(+) + 4 H(+)(out). Core subunit of the mitochondrial membrane respiratory chain NADH dehydrogenase (Complex I) which catalyzes electron transfer from NADH through the respiratory chain, using ubiquinone as an electron acceptor. Part of the enzyme membrane arm which is embedded in the lipid bilayer and involved in proton translocation. This Trachypithecus obscurus (Dusky leaf-monkey) protein is NADH-ubiquinone oxidoreductase chain 4L (MT-ND4L).